Consider the following 1414-residue polypeptide: Chromatin-remodeling ATPase INO80 (1414 aa).

A compositionally biased stretch (basic and acidic residues) spans 106–128 (REREQEEQEERQPARAKTKERAR). Disordered regions lie at residues 106 to 252 (RERE…SIKL) and 330 to 396 (EALA…AIPD). Basic residues predominate over residues 129 to 142 (ARGTAKRAVGRKAT). Over residues 154–173 (GVPAARAAAKAPVRAEGAAE) the composition is skewed to low complexity. Residues 175-186 (PLKRELSGAKLE) are compositionally biased toward basic and acidic residues. The segment covering 187 to 236 (DEGEGEDDDEEEDEDDEDDEDEDEDEDEEEEEEEELEELEDIQLLDDDND) has biased composition (acidic residues). Residues 265 to 341 (IQRELLKMAQ…LAANEQQGNL (77 aa)) are a coiled coil. Positions 350-361 (KQKPAANGAPAA) are enriched in low complexity. One can recognise a DBINO domain in the interval 429–554 (VWKDMARKDS…SHFIGSKIKT (126 aa)). The Helicase ATP-binding domain occupies 667 to 839 (ANLYDQGING…WALLHFIMPS (173 aa)). Residue 681–687 (EMGLGKT) coordinates ATP. A DEAQ box motif is present at residues 790-793 (DEAQ). The region spanning 1244-1398 (KLDELLVRLK…EGKTKENNVQ (155 aa)) is the Helicase C-terminal domain.

The protein belongs to the SNF2/RAD54 helicase family. Component of the INO80 chromatin-remodeling complex.

The protein resides in the nucleus. It catalyses the reaction ATP + H2O = ADP + phosphate + H(+). Functionally, ATPase component of the INO80 complex which remodels chromatin by shifting nucleosomes and is involved in DNA repair. This Eremothecium gossypii (strain ATCC 10895 / CBS 109.51 / FGSC 9923 / NRRL Y-1056) (Yeast) protein is Chromatin-remodeling ATPase INO80 (INO80).